The following is a 188-amino-acid chain: Elongation factor P (188 aa).

Belongs to the elongation factor P family.

The protein resides in the cytoplasm. It participates in protein biosynthesis; polypeptide chain elongation. In terms of biological role, involved in peptide bond synthesis. Stimulates efficient translation and peptide-bond synthesis on native or reconstituted 70S ribosomes in vitro. Probably functions indirectly by altering the affinity of the ribosome for aminoacyl-tRNA, thus increasing their reactivity as acceptors for peptidyl transferase. The sequence is that of Elongation factor P from Rickettsia massiliae (strain Mtu5).